The chain runs to 258 residues: Aspartate/glutamate leucyltransferase (258 aa).

Belongs to the R-transferase family. Bpt subfamily.

It localises to the cytoplasm. It catalyses the reaction N-terminal L-glutamyl-[protein] + L-leucyl-tRNA(Leu) = N-terminal L-leucyl-L-glutamyl-[protein] + tRNA(Leu) + H(+). The catalysed reaction is N-terminal L-aspartyl-[protein] + L-leucyl-tRNA(Leu) = N-terminal L-leucyl-L-aspartyl-[protein] + tRNA(Leu) + H(+). In terms of biological role, functions in the N-end rule pathway of protein degradation where it conjugates Leu from its aminoacyl-tRNA to the N-termini of proteins containing an N-terminal aspartate or glutamate. The polypeptide is Aspartate/glutamate leucyltransferase (Bradyrhizobium sp. (strain BTAi1 / ATCC BAA-1182)).